We begin with the raw amino-acid sequence, 138 residues long: Basic phospholipase A2 sistruxin B (138 aa).

The N-terminal stretch at 1-16 is a signal peptide; it reads MRALWIVAVLLVGVEG. 7 disulfide bridges follow: C42-C131, C44-C60, C59-C111, C65-C138, C66-C104, C73-C97, and C91-C102. The Ca(2+) site is built by Y43, G45, and G47. The active site involves H63. Position 64 (D64) interacts with Ca(2+). D105 is a catalytic residue.

As to quaternary structure, heterodimer of an acidic subunit and a basic chain. The acidic subunit is non-toxic, without enzymatic activity and comprises 3 peptides that are cross-linked by 7 disulfide bridges. The basic subunit is toxic, has phospholipase A2 activity and is composed of a single chain. The cofactor is Ca(2+). Expressed by the venom gland.

It localises to the secreted. The catalysed reaction is a 1,2-diacyl-sn-glycero-3-phosphocholine + H2O = a 1-acyl-sn-glycero-3-phosphocholine + a fatty acid + H(+). Its function is as follows. Snake venom phospholipase A2 (PLA2) that shows presynaptic neurotoxicity. PLA2 catalyzes the calcium-dependent hydrolysis of the 2-acyl groups in 3-sn-phosphoglycerides. This is Basic phospholipase A2 sistruxin B from Sistrurus tergeminus (Western massasauga).